A 640-amino-acid chain; its full sequence is Uromodulin (640 aa).

The N-terminal stretch at Met-1–Thr-24 is a signal peptide. Positions Glu-28–Val-64 constitute an EGF-like 1 domain. 21 disulfide bridges follow: Cys-32–Cys-41, Cys-35–Cys-50, Cys-52–Cys-63, Cys-69–Cys-83, Cys-77–Cys-92, Cys-94–Cys-106, Cys-112–Cys-126, Cys-120–Cys-135, Cys-137–Cys-148, Cys-150–Cys-161, Cys-155–Cys-170, Cys-174–Cys-267, Cys-195–Cys-282, Cys-217–Cys-255, Cys-223–Cys-287, Cys-248–Cys-256, Cys-297–Cys-306, Cys-300–Cys-315, Cys-317–Cys-347, Cys-335–Cys-425, and Cys-366–Cys-389. N-linked (GlcNAc...) asparagine glycosylation is present at Asn-38. The EGF-like 2; calcium-binding domain occupies Asp-65–Thr-107. Residues Asn-76 and Asn-80 are each glycosylated (N-linked (GlcNAc...) asparagine). The 42-residue stretch at Asp-108 to Glu-149 folds into the EGF-like 3; calcium-binding domain. A beta hairpin region spans residues Cys-150 to Ala-171. The D10C stretch occupies residues Asp-172–Ser-291. The N-linked (GlcNAc...) (complex) asparagine glycan is linked to Asn-232. A glycan (N-linked (GlcNAc...) (high mannose) asparagine) is linked at Asn-275. Positions Ser-292–Ile-323 constitute an EGF-like 4 domain. An N-linked (GlcNAc...) (complex) asparagine glycan is attached at Asn-322. The interval Glu-334–Leu-429 is ZP-N. In terms of domain architecture, ZP spans Glu-334–Ser-589. N-linked (GlcNAc...) (complex) asparagine glycosylation is present at Asn-396. The tract at residues Asp-430–Thr-453 is flexible ZP-N/ZP-C linker; important for secretion and polymerization into filaments. Positions Gly-454 to Thr-465 are internal hydrophobic patch (IHP). Residues Gly-454–Ser-589 are ZP-C. 3 disulfides stabilise this stretch: Cys-506–Cys-566, Cys-527–Cys-582, and Cys-571–Cys-578. A glycan (N-linked (GlcNAc...) (complex) asparagine; alternate) is linked at Asn-513. Residue Asn-513 is glycosylated (N-linked (GlcNAc...) (high mannose) asparagine; alternate). The segment at Arg-586–Ser-589 is essential for cleavage by HPN. The interval Val-598–Arg-606 is external hydrophobic patch (EHP); regulates polymerization into filaments. Residue Ser-614 is the site of GPI-anchor amidated serine attachment. The propeptide at Arg-615–Gln-640 is removed in mature form.

In terms of assembly, homodimer that then polymerizes into long filaments. The filaments can additionally assemble laterally to form a sheet. The filaments consist of a zigzag-shaped backbone with laterally protruding arms which interact with bacterial adhesin fimH. Two fimH molecules can bind to a single UMOD monomer. Post-translationally, N-glycosylated. N-glycan heterogeneity at Asn-232: Hex7HexNAc6 (major) and dHex1Hex7HexNAc6 (minor); at Asn-322: dHex1Hex6HexNAc5 (minor), dHex1Hex7HexNAc6 (major) and dHex1Hex8HexNAc7 (minor); at Asn-396: Hex6HexNAc5 (major), dHex1Hex6HexNAc5 (minor) and Hex7HexNAc6 (minor). Glycosylated Asn-232 interacts with E.coli adhesin fimH. Other complex glycosylation sites may serve as binding sites for proteins from other bacteria inclduding K.pneumoniae, P.aeruginosa and S.mitis. Proteolytically cleaved at a conserved C-terminal proteolytic cleavage site to generate the secreted form found in urine. This cleavage is catalyzed by HPN. Expressed in the tubular cells of the kidney. Most abundant protein in normal urine (at protein level). Synthesized exclusively in the kidney. Expressed exclusively by epithelial cells of the thick ascending limb of Henle's loop (TALH) and of distal convoluted tubule lumen.

The protein localises to the apical cell membrane. It is found in the basolateral cell membrane. It localises to the cell projection. Its subcellular location is the cilium membrane. The protein resides in the secreted. Functions in biogenesis and organization of the apical membrane of epithelial cells of the thick ascending limb of Henle's loop (TALH), where it promotes formation of complex filamentous gel-like structure that may play a role in the water barrier permeability. May serve as a receptor for binding and endocytosis of cytokines (IL-1, IL-2) and TNF. Facilitates neutrophil migration across renal epithelia. Functionally, in the urine, may contribute to colloid osmotic pressure, retards passage of positively charged electrolytes, and inhibits formation of liquid containing supersaturated salts and subsequent formation of salt crystals. Protects against urinary tract infections by binding to type 1 fimbriated E.coli. Binds to bacterial adhesin fimH which mediates the stable formation of bacterial aggregates, prevents the binding of E.coli to uroplakins UPK1A and UPK1B which act as urothelial receptors for type I fimbriae, and allows for pathogen clearance through micturation. Also promotes aggregation of other bacteria including K.pneumoniae, P.aeruginosa and S.mitis and so may also protect against other uropathogens. The chain is Uromodulin (UMOD) from Homo sapiens (Human).